A 579-amino-acid polypeptide reads, in one-letter code: MKTTTRQTGRYGAFTPVPLPGRTWPNNIIGSAPRWLSTDLRDGNQSLATPMSPDRKLAMFELLVSMGYKEIEVGFPVASQDDFDFLRVLIEQERIPEDVRISVLVQARDELIRRTVESLEGAPRATIHLYNATSPLFRRVVFGMSRNECKDLAVQGTRLMMKYAEKTLGDCDLGFQYSPELFSDTELDFSLEVCEAVMDVWQPEPGRGIILNFPTTVERSLPNVFADQIEWLSRNLSRREHVCLSIHPHNDRGTAVASAELALLAGAERIEGCLFGNGERAGNVCLVTLGLNMFTHGVDPGIDFSDINEIRRTVERCNGLAVHPRHPYGGDLVYTSFSGSHQDAIKKGFDALEREAAHRGAAVGDLPWEMPYLPLDPEDVGRTYEAVVRINSQSGKGGVAYVMSAWHGLNLPRDLQIDFAHVVQSQADAEGGEITPDRVKRLFEREYLSSSDLPVPLASGTELVTTSLHIDGERFDVGADRADTVQAVRATLTRWGFDVRAVHRTGIAGQDRGPDADVAVYAECRVEGRVSWGVGIDRDIEAASLAAVRSAVIRARLKRLPARGGEATGIVAPLVAAGR.

Residues 33 to 308 (PRWLSTDLRD…DPGIDFSDIN (276 aa)) enclose the Pyruvate carboxyltransferase domain. Mg(2+)-binding residues include D42, H247, H249, and N283. Residues 450-579 (SSDLPVPLAS…IVAPLVAAGR (130 aa)) are regulatory domain.

It belongs to the alpha-IPM synthase/homocitrate synthase family. LeuA type 2 subfamily. Homodimer. Mg(2+) serves as cofactor.

It is found in the cytoplasm. It catalyses the reaction 3-methyl-2-oxobutanoate + acetyl-CoA + H2O = (2S)-2-isopropylmalate + CoA + H(+). It functions in the pathway amino-acid biosynthesis; L-leucine biosynthesis; L-leucine from 3-methyl-2-oxobutanoate: step 1/4. Functionally, catalyzes the condensation of the acetyl group of acetyl-CoA with 3-methyl-2-oxobutanoate (2-ketoisovalerate) to form 3-carboxy-3-hydroxy-4-methylpentanoate (2-isopropylmalate). This chain is 2-isopropylmalate synthase, found in Streptosporangium roseum (strain ATCC 12428 / DSM 43021 / JCM 3005 / KCTC 9067 / NCIMB 10171 / NRRL 2505 / NI 9100).